Reading from the N-terminus, the 335-residue chain is Tetraacyldisaccharide 4'-kinase (335 aa).

59–66 contacts ATP; the sequence is TAGGNGKT.

This sequence belongs to the LpxK family.

The enzyme catalyses a lipid A disaccharide + ATP = a lipid IVA + ADP + H(+). The protein operates within glycolipid biosynthesis; lipid IV(A) biosynthesis; lipid IV(A) from (3R)-3-hydroxytetradecanoyl-[acyl-carrier-protein] and UDP-N-acetyl-alpha-D-glucosamine: step 6/6. In terms of biological role, transfers the gamma-phosphate of ATP to the 4'-position of a tetraacyldisaccharide 1-phosphate intermediate (termed DS-1-P) to form tetraacyldisaccharide 1,4'-bis-phosphate (lipid IVA). The polypeptide is Tetraacyldisaccharide 4'-kinase (Vibrio cholerae serotype O1 (strain ATCC 39541 / Classical Ogawa 395 / O395)).